The following is a 1528-amino-acid chain: 5'-3' exoribonuclease 1 (1528 aa).

3 disordered regions span residues 1246 to 1331 (SKKA…KSSE), 1431 to 1455 (PPPA…NVSD), and 1470 to 1528 (LKKF…DEST). Over residues 1274–1304 (QSEEKLRKERAHDLLNFIKKDTNEKNSESVD) the composition is skewed to basic and acidic residues. A compositionally biased stretch (basic residues) spans 1317–1326 (AKKVLLKRPA). Residues 1500–1517 (SSGTNSTECQSPKSQSNA) show a composition bias toward polar residues. Thr1506 is modified (phosphothreonine). At Ser1510 the chain carries Phosphoserine. Over residues 1518–1528 (ADRDNKKDEST) the composition is skewed to basic and acidic residues.

This sequence belongs to the 5'-3' exonuclease family. Mg(2+) serves as cofactor.

The protein localises to the cytoplasm. It localises to the perinuclear region. Its subcellular location is the P-body. 3'-phosphoadenosine 5'-phosphate (pAp) is an inhibitor of KEM1. Sodium-induced GCN4 expression reduces pAp accumulation by activating HAL2 expression, and therefore maintains mRNA degradation capacity which is likely to be important for the accurate and rapid adaptation of gene expression to salt stress. Multifunctional protein that exhibits several independent functions at different levels of the cellular processes. 5'-3' exonuclease component of the nonsense-mediated mRNA decay (NMD) which is a highly conserved mRNA degradation pathway, an RNA surveillance system whose role is to identify and rid cells of mRNA with premature termination codons and thus prevents accumulation of potentially harmful truncated proteins. The NMD pathway has a second role regulating the decay of wild-type mRNAs, and especially mRNAs that are important for telomere functions. Participate in CTH2-mediated and VTS1-mediated mRNA turnover. Involved in the degradation of several hypomodified mature tRNA species and participates in the 5'-processing or the degradation of the snoRNA precursors and rRNA processing. Involved in defense against virus and suppresses viral RNA recombination by rapidly removing the 5'-truncated RNAs, the substrates of recombination, and thus reducing the chance for recombination to occur in the parental strain. Required for the assembly of the virus-like particles of the Ty3 retrotransposon and contributes to the efficient generation of narnavirus 20S RNA by playing a major role in the elimination of the non-viral upstream sequences from the primary transcripts. Degrades single-stranded DNA (ss-DNA) and can renature complementary ss-DNA as well as catalyzes the formation of heteroduplex DNA from circular ss-DNA and homologous linear ds-DNA in vitro. Acts as a microtubule-associated protein which interacts with cytoplasmic microtubules through beta-tubulin and promotes in vitro assembly of tubulin into microtubules. Associates with microtubule functions such as chromosome transmission, nuclear migration, and SPB duplication. Has also a role in G1 to S transition and is involved in nuclear fusion during karyogamy. Required for the expression of ROK1 at the post-transcriptional level and for the alpha-factor induction of the karyogamy genes KAR3 and KAR4. Plays a role in filamentous growth. The chain is 5'-3' exoribonuclease 1 (XRN1) from Saccharomyces cerevisiae (strain ATCC 204508 / S288c) (Baker's yeast).